A 160-amino-acid chain; its full sequence is uncharacterized protein (160 aa).

One can recognise an HTH marR-type domain in the interval 20 to 152 (EREIWVLYMK…VYEGLSILSR (133 aa)). Residues 66-89 (VSDIAEKMGASLSNTTGLLDRLEK) constitute a DNA-binding region (H-T-H motif).

This is an uncharacterized protein from Bacillus subtilis (strain 168).